Consider the following 192-residue polypeptide: Fe/S biogenesis protein NfuA (192 aa).

[4Fe-4S] cluster contacts are provided by Cys-149 and Cys-152.

The protein belongs to the NfuA family. Homodimer. The cofactor is [4Fe-4S] cluster.

Functionally, involved in iron-sulfur cluster biogenesis. Binds a 4Fe-4S cluster, can transfer this cluster to apoproteins, and thereby intervenes in the maturation of Fe/S proteins. Could also act as a scaffold/chaperone for damaged Fe/S proteins. This is Fe/S biogenesis protein NfuA from Shewanella piezotolerans (strain WP3 / JCM 13877).